The following is a 239-amino-acid chain: Putative ankyrin repeat protein RBE_0489 (239 aa).

ANK repeat units follow at residues 23 to 52 (ISSR…SPNA), 80 to 109 (GIDT…FINA), and 113 to 143 (FGFT…SLTL).

This chain is Putative ankyrin repeat protein RBE_0489, found in Rickettsia bellii (strain RML369-C).